We begin with the raw amino-acid sequence, 172 residues long: RNA silencing suppressor p19 (172 aa).

A compositionally biased stretch (basic and acidic residues) spans 1-15 (MERAIQGNDAREQAY). A disordered region spans residues 1-38 (MERAIQGNDAREQAYGERWNGGPGGSTSPFQLPDESPS).

The protein belongs to the tombusvirus protein p19 family. In terms of assembly, homodimer.

Its function is as follows. Viral suppressor of RNA silencing which binds specifically to silencing RNAs (siRNAs). Acts as a molecular caliper to specifically select siRNAs based on the length of the duplex region of the RNA. In Tomato bushy stunt virus (strain A23) (TBSV), this protein is RNA silencing suppressor p19.